A 503-amino-acid chain; its full sequence is MENQLWQNTLRCCEQYQESPQDAENILFLLLGLIILVNISINVATAMWQGLQNAIDKMIFWMNQKTEVVQVTECPPKEPQPANVQDVHIHCILDPVQVKMAQPTQCSSSSSHYFCKRSNDRRSRRRYGYQQGNLQIHQSSQQQGCLSHQQRLRNRPLSRGYPPFRKQPQGHKMSQMRPMPFFDMEDRDSLPEGHSCPHAKQPRRGWGSLCKPVRLASNVGLWGRQGGILASLPLPSLYLSPELRRLPKRVEAKSELRLQGFGPHYSQSRIWGTVEAEQWASSPPPPRRLLPNPSWVTVGYSSFPSGGHIPYDARDQWRRGTEGCEPPPAFVPRNPREVQGYRDHNSQAHRQNFSSHTHSQPNHSPPQSMGHVGYSSRESHEVRRRAPDWIEVFPSRHPLTTSTSLTALGEASYQRAPPASSGLMIPHSSQRLAEVQISDPTPPPTTFVPLSRNPGGNATYQVYDSLELKRQVQENRGRASSLPPPSTSASRPSLHRSRTGKLN.

Residues 26–46 form a helical membrane-spanning segment; sequence ILFLLLGLIILVNISINVATA. 4 disordered regions span residues 155-176, 311-381, 436-456, and 472-503; these read RPLS…MSQM, YDAR…ESHE, QISD…NPGG, and VQEN…GKLN. Composition is skewed to basic and acidic residues over residues 311 to 322 and 334 to 346; these read YDARDQWRRGTE and NPRE…DHNS. Over residues 348-367 the composition is skewed to polar residues; it reads AHRQNFSSHTHSQPNHSPPQ. The segment covering 493–503 has biased composition (basic residues); the sequence is SLHRSRTGKLN.

The protein localises to the membrane. This is an uncharacterized protein from Mus musculus (Mouse).